The chain runs to 93 residues: Small ribosomal subunit protein uS19 (93 aa).

The protein belongs to the universal ribosomal protein uS19 family.

In terms of biological role, protein S19 forms a complex with S13 that binds strongly to the 16S ribosomal RNA. The sequence is that of Small ribosomal subunit protein uS19 from Pseudarthrobacter chlorophenolicus (strain ATCC 700700 / DSM 12829 / CIP 107037 / JCM 12360 / KCTC 9906 / NCIMB 13794 / A6) (Arthrobacter chlorophenolicus).